Reading from the N-terminus, the 412-residue chain is tRNA N6-adenosine threonylcarbamoyltransferase, mitochondrial (412 aa).

A mitochondrion-targeting transit peptide spans 1–78 (MLCLVYNSIL…IICLNTHRTI (78 aa)). Residues His157 and His161 each contribute to the a divalent metal cation site. Substrate contacts are provided by residues 179-183 (LVSGG), Asp212, Ala228, Glu232, 328-329 (RN), and Ser363. Residue Asp364 participates in a divalent metal cation binding.

The protein belongs to the KAE1 / TsaD family. In terms of assembly, homodimer. The cofactor is a divalent metal cation.

It is found in the mitochondrion. It catalyses the reaction L-threonylcarbamoyladenylate + adenosine(37) in tRNA = N(6)-L-threonylcarbamoyladenosine(37) in tRNA + AMP + H(+). Functionally, required for the formation of a threonylcarbamoyl group on adenosine at position 37 (t(6)A37) in mitochondrial tRNAs that read codons beginning with adenine. Probably involved in the transfer of the threonylcarbamoyl moiety of threonylcarbamoyl-AMP (TC-AMP) to the N6 group of A37. Involved in mitochondrial genome maintenance. The chain is tRNA N6-adenosine threonylcarbamoyltransferase, mitochondrial (pgp1) from Schizosaccharomyces pombe (strain 972 / ATCC 24843) (Fission yeast).